The chain runs to 145 residues: MPGVTVKDVNQQEFVRALAAFLKKSGKLKVPEWVDTVKLAKHKELAPYDENWFYTRAASTARHLYLRGGAGVGSMTKIYGGRQRNGVRPSHFSRGSKSVARRVLQALEGLKMVEKDQDGGRKLTPQGQRDLDRIAGQVAAANKKH.

Residue Lys23 is modified to N6-acetyllysine. At Arg67 the chain carries Omega-N-methylarginine. N6-acetyllysine occurs at positions 111 and 115. Position 143 is an N6-succinyllysine (Lys143).

The protein belongs to the eukaryotic ribosomal protein eS19 family. Component of the small ribosomal subunit. Part of the small subunit (SSU) processome, composed of more than 70 proteins and the RNA chaperone small nucleolar RNA (snoRNA) U3. Interacts with RPS19BP1.

It localises to the cytoplasm. The protein localises to the nucleus. Its subcellular location is the nucleolus. Component of the small ribosomal subunit. The ribosome is a large ribonucleoprotein complex responsible for the synthesis of proteins in the cell. Required for pre-rRNA processing and maturation of 40S ribosomal subunits. Part of the small subunit (SSU) processome, first precursor of the small eukaryotic ribosomal subunit. During the assembly of the SSU processome in the nucleolus, many ribosome biogenesis factors, an RNA chaperone and ribosomal proteins associate with the nascent pre-rRNA and work in concert to generate RNA folding, modifications, rearrangements and cleavage as well as targeted degradation of pre-ribosomal RNA by the RNA exosome. The chain is Small ribosomal subunit protein eS19 (Rps19) from Rattus norvegicus (Rat).